A 425-amino-acid polypeptide reads, in one-letter code: 5'-deoxyadenosine deaminase (425 aa).

Zn(2+) contacts are provided by His-62 and His-64. 2 residues coordinate substrate: Glu-91 and His-183. His-210 serves as a coordination point for Zn(2+). Substrate is bound by residues Glu-213 and Asp-298. Asp-298 is a binding site for Zn(2+).

The protein belongs to the metallo-dependent hydrolases superfamily. MTA/SAH deaminase family. In terms of assembly, homotetramer. It depends on Zn(2+) as a cofactor.

It carries out the reaction 5'-deoxyadenosine + H2O + H(+) = 5'-deoxyinosine + NH4(+). The catalysed reaction is S-adenosyl-L-homocysteine + H2O + H(+) = S-inosyl-L-homocysteine + NH4(+). It catalyses the reaction S-methyl-5'-thioadenosine + H2O + H(+) = S-methyl-5'-thioinosine + NH4(+). The enzyme catalyses adenosine + H2O + H(+) = inosine + NH4(+). The protein operates within amino-acid biosynthesis; S-adenosyl-L-methionine biosynthesis. In terms of biological role, catalyzes the deamination of three SAM-derived enzymatic products, namely 5'-deoxyadenosine, S-adenosyl-L-homocysteine, and 5'-methylthioadenosine, to produce the inosine analogs. Can also deaminate adenosine. The preferred substrate for this enzyme is 5'-deoxyadenosine, but all these substrates are efficiently deaminated. Likely functions in a S-adenosyl-L-methionine (SAM) recycling pathway from S-adenosyl-L-homocysteine (SAH) produced from SAM-dependent methylation reactions. May also be involved in the recycling of 5'-deoxyadenosine, whereupon the 5'-deoxyribose moiety of 5'-deoxyinosine is further metabolized to deoxyhexoses used for the biosynthesis of aromatic amino acids in methanogens. The sequence is that of 5'-deoxyadenosine deaminase from Methanosphaera stadtmanae (strain ATCC 43021 / DSM 3091 / JCM 11832 / MCB-3).